The chain runs to 320 residues: Aspartate carbamoyltransferase catalytic subunit (320 aa).

2 residues coordinate carbamoyl phosphate: Arg-68 and Thr-69. Residue Lys-96 coordinates L-aspartate. The carbamoyl phosphate site is built by Arg-118, His-148, and Gln-151. L-aspartate contacts are provided by Arg-181 and Arg-236. The carbamoyl phosphate site is built by Gly-277 and Pro-278.

This sequence belongs to the aspartate/ornithine carbamoyltransferase superfamily. ATCase family. Heterododecamer (2C3:3R2) of six catalytic PyrB chains organized as two trimers (C3), and six regulatory PyrI chains organized as three dimers (R2).

It carries out the reaction carbamoyl phosphate + L-aspartate = N-carbamoyl-L-aspartate + phosphate + H(+). The protein operates within pyrimidine metabolism; UMP biosynthesis via de novo pathway; (S)-dihydroorotate from bicarbonate: step 2/3. In terms of biological role, catalyzes the condensation of carbamoyl phosphate and aspartate to form carbamoyl aspartate and inorganic phosphate, the committed step in the de novo pyrimidine nucleotide biosynthesis pathway. The polypeptide is Aspartate carbamoyltransferase catalytic subunit (Polaromonas naphthalenivorans (strain CJ2)).